The sequence spans 235 residues: Lipoprotein-releasing system ATP-binding protein LolD (235 aa).

An ABC transporter domain is found at 5 to 235; sequence LECRDIRKVY…LMTESASVEG (231 aa). ATP is bound at residue 41–48; the sequence is GSSGSGKS.

This sequence belongs to the ABC transporter superfamily. Lipoprotein translocase (TC 3.A.1.125) family. The complex is composed of two ATP-binding proteins (LolD) and two transmembrane proteins (LolC and LolE).

It is found in the cell inner membrane. In terms of biological role, part of the ABC transporter complex LolCDE involved in the translocation of mature outer membrane-directed lipoproteins, from the inner membrane to the periplasmic chaperone, LolA. Responsible for the formation of the LolA-lipoprotein complex in an ATP-dependent manner. The polypeptide is Lipoprotein-releasing system ATP-binding protein LolD (Vibrio parahaemolyticus serotype O3:K6 (strain RIMD 2210633)).